The sequence spans 73 residues: Translation initiation factor IF-1 (73 aa).

The 73-residue stretch at 1-73 folds into the S1-like domain; the sequence is MAKKEDTIVL…TKARVVYRHR (73 aa).

This sequence belongs to the IF-1 family. In terms of assembly, component of the 30S ribosomal translation pre-initiation complex which assembles on the 30S ribosome in the order IF-2 and IF-3, IF-1 and N-formylmethionyl-tRNA(fMet); mRNA recruitment can occur at any time during PIC assembly.

It localises to the cytoplasm. In terms of biological role, one of the essential components for the initiation of protein synthesis. Stabilizes the binding of IF-2 and IF-3 on the 30S subunit to which N-formylmethionyl-tRNA(fMet) subsequently binds. Helps modulate mRNA selection, yielding the 30S pre-initiation complex (PIC). Upon addition of the 50S ribosomal subunit IF-1, IF-2 and IF-3 are released leaving the mature 70S translation initiation complex. The chain is Translation initiation factor IF-1 from Chlamydia caviae (strain ATCC VR-813 / DSM 19441 / 03DC25 / GPIC) (Chlamydophila caviae).